A 284-amino-acid chain; its full sequence is RNase adapter protein RapZ (284 aa).

8–15 serves as a coordination point for ATP; that stretch reads GRSGSGKS. 56-59 provides a ligand contact to GTP; that stretch reads DVRN. Residues 266–284 are RNA-binding; it reads RARGKNVQSRHRTLEKRKQ.

It belongs to the RapZ-like family. RapZ subfamily. Homotrimer.

Modulates the synthesis of GlmS, by affecting the processing and stability of the regulatory small RNA GlmZ. When glucosamine-6-phosphate (GlcN6P) concentrations are high in the cell, RapZ binds GlmZ and targets it to cleavage by RNase E. Consequently, GlmZ is inactivated and unable to activate GlmS synthesis. Under low GlcN6P concentrations, RapZ is sequestered and inactivated by an other regulatory small RNA, GlmY, preventing GlmZ degradation and leading to synthesis of GlmS. The protein is RNase adapter protein RapZ of Yersinia pseudotuberculosis serotype O:1b (strain IP 31758).